The sequence spans 348 residues: MNNRVGTIGNASPLTADAHPMIDPFGRAVTYLRVSVTDRCDFRCTYCMAENMTFLPKKDLLTLEELDRLCSAFIAKGVSKIRLTGGEPLVRKNIMYLVRKLGAKIGSGLDELTLTTNGSQLSRHAAELHDCGVRRINVSLDTLDPDKFRKITRWGDFDKVMEGIDAAQKAGIKIKLNAVALKNFNDAEIPDLLRFAHGRGMDLTVIETMPMGEIEEDRTDQYLPLSELRADLERQFTLTDIDYQTGGPARYVRVSETGGRLGFITPMTHNFCESCNRVRLTCTGTLYMCLGQNDAADLRAALRATEDDALLHAAIDEAITRKPKGHDFIIDRTHNRPAVARHMSVTGG.

Positions 24 to 248 constitute a Radical SAM core domain; sequence PFGRAVTYLR…TDIDYQTGGP (225 aa). R33 contributes to the GTP binding site. [4Fe-4S] cluster-binding residues include C40 and C44. Position 46 (Y46) interacts with S-adenosyl-L-methionine. C47 contacts [4Fe-4S] cluster. R82 is a GTP binding site. G86 serves as a coordination point for S-adenosyl-L-methionine. T115 is a GTP binding site. S139 contacts S-adenosyl-L-methionine. K175 contributes to the GTP binding site. M209 is an S-adenosyl-L-methionine binding site. Positions 272 and 275 each coordinate [4Fe-4S] cluster. 277–279 is a GTP binding site; the sequence is RVR. C289 serves as a coordination point for [4Fe-4S] cluster.

It belongs to the radical SAM superfamily. MoaA family. In terms of assembly, monomer and homodimer. It depends on [4Fe-4S] cluster as a cofactor.

It carries out the reaction GTP + AH2 + S-adenosyl-L-methionine = (8S)-3',8-cyclo-7,8-dihydroguanosine 5'-triphosphate + 5'-deoxyadenosine + L-methionine + A + H(+). It functions in the pathway cofactor biosynthesis; molybdopterin biosynthesis. Functionally, catalyzes the cyclization of GTP to (8S)-3',8-cyclo-7,8-dihydroguanosine 5'-triphosphate. This is GTP 3',8-cyclase from Rhizobium etli (strain ATCC 51251 / DSM 11541 / JCM 21823 / NBRC 15573 / CFN 42).